Reading from the N-terminus, the 547-residue chain is MSSNTMLQKTLLILISFSVVTWMIFIISQNFTKLWSALNLSISVHYWNNSAKSLFPKTSLIPLKPLTETELRIKEIIEKLDQQIPPRPFTHVNTTTSATHSTATILNPRDTYCRGDQLDILLEVRDHLGQRKQYGGDFLRARMSSPALTAGASGKVMDFNNGTYLVSFTLFWEGQVSLSLLLIHPSEGASALWRARNQGYDKIIFKGKFVNGTSHVFTECGLTLNSNAELCEYLDDRDQEAFYCMKPQHMPCEALTYMTTRNREVSYLTDKENSLFHRSKVGVEMMKDRKHIDVTNCNKREKIEETCQVGMKPPVPGGYTLQGKWITTFCNQVQLDTIKINGCLKGKLIYLLGDSTLRQWIYYFPKVVKTLKFFDLHETGIFKKHLLLDAERHTQIQWKKHSYPFVTFQLYSLIDHDYIPREIDRLSGDKNTAIVITFGQHFRPFPIDIFIRRAIGVQKAIERLFLRSPATKVIIKTENIREMHIETERFGDFHGYIHYLIMKDIFKDLNVGIIDAWDMTIAYGTDTIHPPDHVIGNQINMFLNYIC.

The N-terminal stretch at 1–21 (MSSNTMLQKTLLILISFSVVT) is a signal peptide. Asn-39 and Asn-211 each carry an N-linked (GlcNAc...) asparagine glycan.

The protein belongs to the NXPE family.

The protein localises to the secreted. This chain is NXPE family member 1 (NXPE1), found in Homo sapiens (Human).